Reading from the N-terminus, the 169-residue chain is Peptide deformylase (169 aa).

Fe cation is bound by residues C91 and H133. The active site involves E134. Fe cation is bound at residue H137.

The protein belongs to the polypeptide deformylase family. Requires Fe(2+) as cofactor.

The catalysed reaction is N-terminal N-formyl-L-methionyl-[peptide] + H2O = N-terminal L-methionyl-[peptide] + formate. Functionally, removes the formyl group from the N-terminal Met of newly synthesized proteins. Requires at least a dipeptide for an efficient rate of reaction. N-terminal L-methionine is a prerequisite for activity but the enzyme has broad specificity at other positions. The sequence is that of Peptide deformylase from Citrobacter koseri (strain ATCC BAA-895 / CDC 4225-83 / SGSC4696).